The primary structure comprises 135 residues: Salivary protein 15 (135 aa).

The signal sequence occupies residues 1–21; that stretch reads MESFVAMKVVCILFLVGVVAA. The N-linked (GlcNAc...) asparagine glycan is linked to asparagine 22. Positions 48–67 are required for Borrelia OspC-binding; it reads PNYISNHQKLALKLLKICKD. Residues asparagine 92 and asparagine 104 are each glycosylated (N-linked (GlcNAc...) asparagine). Residues 116–135 are CD4-binding; it reads GPNGQTCAEKNKCVGHIPGC.

It belongs to the salp15 family. Monomer. Interacts with host CD4. Interacts with host DC-SIGN (CD209). As to quaternary structure, (Microbial infection) Interacts with Borrelia outer surface protein C (OspC). Glycosylated. Expressed in salivary glands. Detected in host skin, at the site of natural inoculation.

The protein resides in the secreted. Functionally, salivary tick protein that downregulates host immune system by binding to both dendritic cells, and CD4(+) T cells. Specifically binds to the CD4 coreceptor on T cells. This interaction prevents the activation of the Src kinase, Lck, and its downstream substrate Zap-70, and results in deficient activation of PLCgamma1, the repression of calcium fluxes triggered by T-cell antigen receptor (TCR) ligation, and a subsequent reduction in interleukin-2 production. This salivary protein also binds to DC-SIGN (CD209) on dendritic cells (DC) and activates the Raf-1 kinase/MEK signaling pathway that results in down-regulating expression of pro-inflammatory cytokines. Furthermore, it inhibits T cell proliferation induced by DCs. It also inhibits in vitro keratinocyte inflammation induced by Borrelia burgdorferi or by the major outer surface protein (OspC) of Borrelia. In addition, it downregulates chemokines and monocyte chemoattractant protein 1, as well as several antimicrobial peptides such as defensins, cathelicidin, psoriasin, and RNase 7. Apart from its immunomodulatory activities, it is also associated with protection of Borrelia spirochetes from antibody-mediated killing through its binding to OspC. In vivo, tests on different immune disease animal models show promising therapeutic results, e.g., in inhibiting HIV infection, experimental autoimmune encephalomyelitis, transplantation rejection, and asthma. In terms of biological role, (Microbial infection) Protects Borrelia garinii (strains A87S and VSBP) from host complement-mediated killing. Its function is as follows. (Microbial infection) Partially protects Borrelia burgdorferi (strains VS215 and B31) from host complement-mediated killing. This is Salivary protein 15 from Ixodes scapularis (Black-legged tick).